The primary structure comprises 245 residues: 1-(5-phosphoribosyl)-5-[(5-phosphoribosylamino)methylideneamino] imidazole-4-carboxamide isomerase (245 aa).

Aspartate 8 serves as the catalytic Proton acceptor. Catalysis depends on aspartate 130, which acts as the Proton donor.

The protein belongs to the HisA/HisF family.

The protein resides in the cytoplasm. It carries out the reaction 1-(5-phospho-beta-D-ribosyl)-5-[(5-phospho-beta-D-ribosylamino)methylideneamino]imidazole-4-carboxamide = 5-[(5-phospho-1-deoxy-D-ribulos-1-ylimino)methylamino]-1-(5-phospho-beta-D-ribosyl)imidazole-4-carboxamide. It functions in the pathway amino-acid biosynthesis; L-histidine biosynthesis; L-histidine from 5-phospho-alpha-D-ribose 1-diphosphate: step 4/9. This chain is 1-(5-phosphoribosyl)-5-[(5-phosphoribosylamino)methylideneamino] imidazole-4-carboxamide isomerase, found in Azotobacter vinelandii (strain DJ / ATCC BAA-1303).